The sequence spans 187 residues: ATP synthase subunit delta (187 aa).

Belongs to the ATPase delta chain family. In terms of assembly, F-type ATPases have 2 components, F(1) - the catalytic core - and F(0) - the membrane proton channel. F(1) has five subunits: alpha(3), beta(3), gamma(1), delta(1), epsilon(1). F(0) has three main subunits: a(1), b(2) and c(10-14). The alpha and beta chains form an alternating ring which encloses part of the gamma chain. F(1) is attached to F(0) by a central stalk formed by the gamma and epsilon chains, while a peripheral stalk is formed by the delta and b chains.

Its subcellular location is the cell membrane. In terms of biological role, f(1)F(0) ATP synthase produces ATP from ADP in the presence of a proton or sodium gradient. F-type ATPases consist of two structural domains, F(1) containing the extramembraneous catalytic core and F(0) containing the membrane proton channel, linked together by a central stalk and a peripheral stalk. During catalysis, ATP synthesis in the catalytic domain of F(1) is coupled via a rotary mechanism of the central stalk subunits to proton translocation. Functionally, this protein is part of the stalk that links CF(0) to CF(1). It either transmits conformational changes from CF(0) to CF(1) or is implicated in proton conduction. The polypeptide is ATP synthase subunit delta (Mesomycoplasma hyopneumoniae (strain J / ATCC 25934 / NCTC 10110) (Mycoplasma hyopneumoniae)).